Reading from the N-terminus, the 1213-residue chain is DNA-directed RNA polymerase subunit beta' (1213 aa).

Zn(2+) contacts are provided by Cys60, Cys62, Cys75, and Cys78. Residues Asp450, Asp452, and Asp454 each contribute to the Mg(2+) site. Residues Cys819, Cys893, Cys900, and Cys903 each coordinate Zn(2+).

The protein belongs to the RNA polymerase beta' chain family. In terms of assembly, the RNAP catalytic core consists of 2 alpha, 1 beta, 1 beta' and 1 omega subunit. When a sigma factor is associated with the core the holoenzyme is formed, which can initiate transcription. The cofactor is Mg(2+). It depends on Zn(2+) as a cofactor.

It catalyses the reaction RNA(n) + a ribonucleoside 5'-triphosphate = RNA(n+1) + diphosphate. Its function is as follows. DNA-dependent RNA polymerase catalyzes the transcription of DNA into RNA using the four ribonucleoside triphosphates as substrates. This Streptococcus pyogenes serotype M1 protein is DNA-directed RNA polymerase subunit beta'.